The primary structure comprises 448 residues: DNA primase DnaG (448 aa).

Residues Asp-186 to Pro-260 enclose the Toprim domain. Residues Glu-192, Asp-234, and Asp-236 each coordinate Mg(2+). The tract at residues Ala-318–Gln-340 is disordered. Basic and acidic residues predominate over residues Pro-329 to Gln-338.

This sequence belongs to the archaeal DnaG primase family. Forms a ternary complex with MCM helicase and DNA. Component of the archaeal exosome complex. Mg(2+) is required as a cofactor.

The catalysed reaction is ssDNA + n NTP = ssDNA/pppN(pN)n-1 hybrid + (n-1) diphosphate.. Its function is as follows. RNA polymerase that catalyzes the synthesis of short RNA molecules used as primers for DNA polymerase during DNA replication. Also part of the exosome, which is a complex involved in RNA degradation. Acts as a poly(A)-binding protein that enhances the interaction between heteromeric, adenine-rich transcripts and the exosome. The polypeptide is DNA primase DnaG (Thermoplasma acidophilum (strain ATCC 25905 / DSM 1728 / JCM 9062 / NBRC 15155 / AMRC-C165)).